We begin with the raw amino-acid sequence, 210 residues long: Leucyl/phenylalanyl-tRNA--protein transferase (210 aa).

This sequence belongs to the L/F-transferase family.

The protein resides in the cytoplasm. It catalyses the reaction N-terminal L-lysyl-[protein] + L-leucyl-tRNA(Leu) = N-terminal L-leucyl-L-lysyl-[protein] + tRNA(Leu) + H(+). The enzyme catalyses N-terminal L-arginyl-[protein] + L-leucyl-tRNA(Leu) = N-terminal L-leucyl-L-arginyl-[protein] + tRNA(Leu) + H(+). It carries out the reaction L-phenylalanyl-tRNA(Phe) + an N-terminal L-alpha-aminoacyl-[protein] = an N-terminal L-phenylalanyl-L-alpha-aminoacyl-[protein] + tRNA(Phe). Functionally, functions in the N-end rule pathway of protein degradation where it conjugates Leu, Phe and, less efficiently, Met from aminoacyl-tRNAs to the N-termini of proteins containing an N-terminal arginine or lysine. The sequence is that of Leucyl/phenylalanyl-tRNA--protein transferase from Ruegeria sp. (strain TM1040) (Silicibacter sp.).